Consider the following 173-residue polypeptide: NAD(P)H-quinone oxidoreductase subunit I, chloroplastic (173 aa).

2 4Fe-4S ferredoxin-type domains span residues 55-84 (GRIHFEFDKCIACEVCVRVCPINLPVVDWD) and 95-124 (RSYSIDFGVCIFCGNCVEYCPTNCLSMTEE). Residues Cys64, Cys67, Cys70, Cys74, Cys104, Cys107, Cys110, and Cys114 each contribute to the [4Fe-4S] cluster site.

It belongs to the complex I 23 kDa subunit family. In terms of assembly, NDH is composed of at least 16 different subunits, 5 of which are encoded in the nucleus. Requires [4Fe-4S] cluster as cofactor.

The protein resides in the plastid. The protein localises to the chloroplast thylakoid membrane. It catalyses the reaction a plastoquinone + NADH + (n+1) H(+)(in) = a plastoquinol + NAD(+) + n H(+)(out). The enzyme catalyses a plastoquinone + NADPH + (n+1) H(+)(in) = a plastoquinol + NADP(+) + n H(+)(out). Its function is as follows. NDH shuttles electrons from NAD(P)H:plastoquinone, via FMN and iron-sulfur (Fe-S) centers, to quinones in the photosynthetic chain and possibly in a chloroplast respiratory chain. The immediate electron acceptor for the enzyme in this species is believed to be plastoquinone. Couples the redox reaction to proton translocation, and thus conserves the redox energy in a proton gradient. The sequence is that of NAD(P)H-quinone oxidoreductase subunit I, chloroplastic from Nephroselmis olivacea (Green alga).